We begin with the raw amino-acid sequence, 832 residues long: Prickle-like protein 1 (832 aa).

Residues 14–122 enclose the PET domain; it reads FGCQRSSTSD…TIKLLSRAVM (109 aa). 3 consecutive LIM zinc-binding domains span residues 124–188, 189–249, and 250–313; these read AVCE…ELLK, PRCS…LYAE, and YCET…EDIH. The disordered stretch occupies residues 314-342; the sequence is ASDSSDSAFQSARSRDSRRSVRMGRSSRS. 3 positions are modified to phosphoserine: Ser-315, Ser-592, and Ser-595. Disordered stretches follow at residues 663-688 and 765-832; these read HFEE…DNAL and SSST…CIIS. Basic residues predominate over residues 670-681; that stretch reads RPHHHRHRRSRK. The residue at position 684 (Ser-684) is a Phosphoserine. A compositionally biased stretch (polar residues) spans 798 to 815; that stretch reads DLSSPASALPTPQFTQRT. The segment covering 816 to 832 has biased composition (basic residues); it reads TKSKKKKGHKGKNCIIS. Residue Cys-829 is modified to Cysteine methyl ester. Cys-829 is lipidated: S-farnesyl cysteine. Residues 830-832 constitute a propeptide, removed in mature form; it reads IIS.

It belongs to the prickle / espinas / testin family. In terms of assembly, interacts with REST.

It is found in the nucleus membrane. The protein resides in the cytoplasm. The protein localises to the cytosol. Involved in the planar cell polarity pathway that controls convergent extension during gastrulation and neural tube closure. Convergent extension is a complex morphogenetic process during which cells elongate, move mediolaterally, and intercalate between neighboring cells, leading to convergence toward the mediolateral axis and extension along the anteroposterior axis. Necessary for nuclear localization of REST. May serve as nuclear receptor. This is Prickle-like protein 1 (Prickle1) from Mus musculus (Mouse).